We begin with the raw amino-acid sequence, 513 residues long: ATP synthase subunit alpha (513 aa).

ATP is bound at residue 169 to 176 (GDRQTGKT).

It belongs to the ATPase alpha/beta chains family. F-type ATPases have 2 components, CF(1) - the catalytic core - and CF(0) - the membrane proton channel. CF(1) has five subunits: alpha(3), beta(3), gamma(1), delta(1), epsilon(1). CF(0) has three main subunits: a(1), b(2) and c(9-12). The alpha and beta chains form an alternating ring which encloses part of the gamma chain. CF(1) is attached to CF(0) by a central stalk formed by the gamma and epsilon chains, while a peripheral stalk is formed by the delta and b chains.

The protein resides in the cell inner membrane. The catalysed reaction is ATP + H2O + 4 H(+)(in) = ADP + phosphate + 5 H(+)(out). Produces ATP from ADP in the presence of a proton gradient across the membrane. The alpha chain is a regulatory subunit. The polypeptide is ATP synthase subunit alpha (Actinobacillus pleuropneumoniae serotype 3 (strain JL03)).